The following is a 100-amino-acid chain: Small ribosomal subunit protein uS14c (100 aa).

The protein belongs to the universal ribosomal protein uS14 family. As to quaternary structure, part of the 30S ribosomal subunit.

The protein resides in the plastid. In terms of biological role, binds 16S rRNA, required for the assembly of 30S particles. This is Small ribosomal subunit protein uS14c (rps14) from Cuscuta reflexa (Southern Asian dodder).